We begin with the raw amino-acid sequence, 396 residues long: Probable sugar efflux transporter (396 aa).

A run of 12 helical transmembrane segments spans residues 15–35, 50–70, 81–101, 103–123, 136–156, 169–189, 209–229, 246–266, 275–295, 301–321, 333–353, and 364–384; these read VVTL…PVGL, VGIM…PFML, LICL…AWNF, VLVI…SITA, AQAL…GLPI, TFFA…KLLP, PALM…YTAY, FATV…LVFG, LLVS…LPAA, LALL…GMQV, VAMA…ALAG, and TIGY…VLIF.

The protein belongs to the major facilitator superfamily. SotB (TC 2.A.1.2) family.

Its subcellular location is the cell inner membrane. In terms of biological role, involved in the efflux of sugars. The physiological role may be the reduction of the intracellular concentration of toxic sugars or sugar metabolites. The polypeptide is Probable sugar efflux transporter (Salmonella arizonae (strain ATCC BAA-731 / CDC346-86 / RSK2980)).